Reading from the N-terminus, the 29-residue chain is Cyclotide vibi-B (29 aa).

Positions Gly-1 to Asn-29 form a cross-link, cyclopeptide (Gly-Asn). 3 disulfide bridges follow: Cys-5–Cys-19, Cys-9–Cys-21, and Cys-14–Cys-26.

In terms of processing, this is a cyclic peptide.

Probably participates in a plant defense mechanism. The protein is Cyclotide vibi-B of Viola biflora (Yellow wood violet).